The chain runs to 341 residues: Zinc transporter 6, chloroplastic (341 aa).

The chain crosses the membrane as a helical span at residues 28-48; it reads IVAVFAIFLTSVFGVWGPVLL. Over 49–61 the chain is Cytoplasmic; the sequence is AKYFHGKPLYDKA. Residues 62-82 form a helical membrane-spanning segment; the sequence is ILVIKCFAAGVILSTSLVHVL. At 83 to 102 the chain is on the lumenal side; the sequence is PEAFESLADCQVSSRHPWKD. Residues 103 to 123 traverse the membrane as a helical segment; sequence FPFAGLVTMIGAITALLVDLT. Topologically, residues 124-179 are cytoplasmic; that stretch reads ASEHMGHGGGGGGDGGMEYMPVGKAVGGLEMKEGKCGADLEIQENSEEEIVKMKQR. The chain crosses the membrane as a helical span at residues 180–200; sequence LVSQVLEIGIIFHSVIIGVTM. Topologically, residues 201–211 are lumenal; the sequence is GMSQNKCTIRP. Residues 212–232 form a helical membrane-spanning segment; it reads LIAALSFHQIFEGLGLGGCIA. Over 233 to 243 the chain is Cytoplasmic; the sequence is QAGFKAGTVVY. Residues 244 to 264 form a helical membrane-spanning segment; the sequence is MCLMFAVTTPLGIVLGMVIFA. At 265 to 280 the chain is on the lumenal side; sequence ATGYDDQNPNALIMEG. The helical transmembrane segment at 281–301 threads the bilayer; that stretch reads LLGSFSSGILIYMALVDLIAL. Residues 302–320 lie on the Cytoplasmic side of the membrane; sequence DFFHNKMLTTCGESGSRLK. The chain crosses the membrane as a helical span at residues 321–341; it reads KLCFVALVLGSASMSLLALWA.

The protein belongs to the ZIP transporter (TC 2.A.5) family.

Its subcellular location is the plastid. It is found in the chloroplast thylakoid membrane. Its function is as follows. May play a role in the transport of zinc in the plastids. In Arabidopsis thaliana (Mouse-ear cress), this protein is Zinc transporter 6, chloroplastic (ZIP6).